Here is a 65-residue protein sequence, read N- to C-terminus: Kappa-scoloptoxin(04)-Ssd1a (65 aa).

The first 24 residues, 1–24 (MKKTCVVSVFLVLLLLKFHDLSMG), serve as a signal peptide directing secretion. The propeptide occupies 25–36 (EEISPLKKVAPR). 2 cysteine pairs are disulfide-bonded: cysteine 42-cysteine 53 and cysteine 47-cysteine 60.

Expressed by the venom gland.

It localises to the secreted. In terms of biological role, voltage-gated potassium channel inhibitor. This Scolopendra dehaani (Thai centipede) protein is Kappa-scoloptoxin(04)-Ssd1a.